The primary structure comprises 327 residues: MEKNYYALAYYYFGPVSNPYEEIALHKQLFKTMDVSCRIYISEEGINGQFSGYQPDAERYMAWLKQRPDFASIKFKIHHIEENIFPRVTVKYRKELVALGCSVDTTKQGKHISPEEWHEKLQENRCLVLDVRNNYEWKIGHFENAVLPDIETFREFPDYADRLAKEHDPAKTPVMMYCTGGIRCELYSALLLEKGFKEVYQLDGGVIAYGLKMGTGKWRGKLFVFDDRMAMPIDEADPNVSPIARCSLCNTDSDTYYNCANTDCNNLFICCESCIATHKGCCSEECSQAPRIRAFSAERGNKPFRRKHLCPTIEQSCCLKEQENQPA.

The 97-residue stretch at 122-218 (QENRCLVLDV…YGLKMGTGKW (97 aa)) folds into the Rhodanese domain. The active-site Cysteine persulfide intermediate is the cysteine 178.

This sequence belongs to the TrhO family.

It catalyses the reaction uridine(34) in tRNA + AH2 + O2 = 5-hydroxyuridine(34) in tRNA + A + H2O. Catalyzes oxygen-dependent 5-hydroxyuridine (ho5U) modification at position 34 in tRNAs. This is tRNA uridine(34) hydroxylase from Chlamydia trachomatis serovar L2 (strain ATCC VR-902B / DSM 19102 / 434/Bu).